The chain runs to 259 residues: uncharacterized protein (259 aa).

This sequence belongs to the BtpA family.

This is an uncharacterized protein from Pyrococcus abyssi (strain GE5 / Orsay).